A 91-amino-acid chain; its full sequence is Antitoxin RelJ (91 aa).

Belongs to the phD/YefM antitoxin family. In terms of assembly, homodimer.

Antitoxin component of a type II toxin-antitoxin (TA) system. A probable antitoxin for the putative mRNA interferase RelK. The polypeptide is Antitoxin RelJ (relJ) (Mycobacterium tuberculosis (strain CDC 1551 / Oshkosh)).